The following is a 459-amino-acid chain: Nucleobindin-1 (459 aa).

An N-terminal signal peptide occupies residues 1-25; the sequence is MPTSVPRGAPFLLLPPLLMLSAVLA. Residue S85 is modified to Phosphoserine. T147 is subject to Phosphothreonine. Residues 149–217 are a coiled coil; sequence EARDLELLIQ…QQRRHREHPK (69 aa). A DNA-binding region spans residues 171 to 217; that stretch reads HHEEFKRYEMLKEHERRRYLESLGEEQRKEAERKLQEQQRRHREHPK. A compositionally biased stretch (basic and acidic residues) spans 192–209; it reads SLGEEQRKEAERKLQEQQ. A disordered region spans residues 192–220; sequence SLGEEQRKEAERKLQEQQRRHREHPKVNV. Residues 227 to 320 are binds to GNAI2 and GNAI3; that stretch reads LKEVWEELDG…VTLEEFLAST (94 aa). EF-hand domains are found at residues 239–274 and 291–326; these read PNRF…ELEK and ERLR…KEFG. Residues D252, N254, D256, E263, D304, N306, D308, and E315 each coordinate Ca(2+). The GBA signature appears at 302–332; the sequence is NVDTNQDRLVTLEEFLASTQRKEFGETAEGW. The stretch at 340-407 forms a coiled coil; that stretch reads AYTEEELKRF…RKQQQQEQSA (68 aa). At S368 the chain carries Phosphoserine. Residues 393–459 are disordered; the sequence is LQMEQRKQQQ…VLPQLDSQHL (67 aa). A compositionally biased stretch (basic and acidic residues) spans 433 to 445; sequence DQKDVPASEKKVP. At S456 the chain carries Phosphoserine.

The protein belongs to the nucleobindin family. In terms of assembly, interacts (via GBA motif) with guanine nucleotide-binding protein G(i) alpha subunits GNAI1, GNAI2 and GNAI3 with higher affinity for GNAI1 and GNAI3 than for GNAI2. Preferentially interacts with inactive rather than active GNAI3. Interaction with GNAI3 is inhibited when NUCB1 binds calcium, probably due to a conformational change which renders the GBA motif inaccessible. Minor constituent of the mineralized matrix of bone. Detected in calvaria, rib cartilage, liver, kidney, spleen, brain, lung, skeletal and heart muscle with highest expression in calvaria and approximately half the amount in kidney, liver and brain.

The protein localises to the golgi apparatus. It is found in the cis-Golgi network membrane. The protein resides in the cytoplasm. It localises to the secreted. In terms of biological role, major calcium-binding protein of the Golgi which may have a role in calcium homeostasis. Acts as a non-receptor guanine nucleotide exchange factor which binds to and activates alpha subunits of guanine nucleotide-binding proteins (G proteins). This chain is Nucleobindin-1 (Nucb1), found in Rattus norvegicus (Rat).